A 305-amino-acid chain; its full sequence is tRNA pseudouridine synthase B (305 aa).

Asp48 serves as the catalytic Nucleophile.

This sequence belongs to the pseudouridine synthase TruB family. Type 1 subfamily.

The catalysed reaction is uridine(55) in tRNA = pseudouridine(55) in tRNA. In terms of biological role, responsible for synthesis of pseudouridine from uracil-55 in the psi GC loop of transfer RNAs. The polypeptide is tRNA pseudouridine synthase B (Stutzerimonas stutzeri (strain A1501) (Pseudomonas stutzeri)).